Reading from the N-terminus, the 335-residue chain is Probable deoxyhypusine synthase (335 aa).

The active-site Nucleophile is the lysine 307.

Belongs to the deoxyhypusine synthase family. NAD(+) is required as a cofactor.

It catalyses the reaction [eIF5A protein]-L-lysine + spermidine = [eIF5A protein]-deoxyhypusine + propane-1,3-diamine. It functions in the pathway protein modification; eIF5A hypusination. In terms of biological role, catalyzes the NAD-dependent oxidative cleavage of spermidine and the subsequent transfer of the butylamine moiety of spermidine to the epsilon-amino group of a specific lysine residue of the eIF-5A precursor protein to form the intermediate deoxyhypusine residue. The chain is Probable deoxyhypusine synthase (dys) from Pyrococcus abyssi (strain GE5 / Orsay).